A 54-amino-acid polypeptide reads, in one-letter code: MRLHKTFICFSQNKRGCRNILQENSRMIFENKILIMILRQGIFFNISVSTKISF.

This is an uncharacterized protein from Saccharomyces cerevisiae (strain ATCC 204508 / S288c) (Baker's yeast).